The following is a 398-amino-acid chain: Energy-coupling factor transporter ATP-binding protein EcfA2 (398 aa).

The ABC transporter domain occupies 5-240 (IELKDLEYAY…KELVRRARLK (236 aa)). ATP is bound at residue 38–45 (GSNGAGKS).

This sequence belongs to the ABC transporter superfamily. Energy-coupling factor EcfA family. In terms of assembly, forms a stable energy-coupling factor (ECF) transporter complex composed of 2 membrane-embedded substrate-binding proteins (S component), 2 ATP-binding proteins (A component) and 2 transmembrane proteins (T component).

Its subcellular location is the cell membrane. Its function is as follows. ATP-binding (A) component of a common energy-coupling factor (ECF) ABC-transporter complex. Unlike classic ABC transporters this ECF transporter provides the energy necessary to transport a number of different substrates. This chain is Energy-coupling factor transporter ATP-binding protein EcfA2, found in Methanospirillum hungatei JF-1 (strain ATCC 27890 / DSM 864 / NBRC 100397 / JF-1).